The primary structure comprises 229 residues: Transcriptional activator protein IrlR (229 aa).

The 114-residue stretch at 2–115 (RILIVEDEPK…ELVARVRSIL (114 aa)) folds into the Response regulatory domain. 4-aspartylphosphate is present on aspartate 51. Positions 123–221 (STVLRIADLE…VRGMGYVLEV (99 aa)) form a DNA-binding region, ompR/PhoB-type.

Post-translationally, phosphorylated by IrlS.

Its function is as follows. Member of the two-component regulatory system IrlR/IrlS. May be involved in invasion of eukaryotic cells and heavy-metal resistance. The chain is Transcriptional activator protein IrlR (irlR) from Burkholderia pseudomallei (strain 1026b).